Here is a 536-residue protein sequence, read N- to C-terminus: Phosphoenolpyruvate carboxykinase (ATP) (536 aa).

Substrate is bound by residues arginine 61, tyrosine 195, and lysine 201. ATP is bound by residues lysine 201, histidine 220, and 236–244 (GLSGTGKTT). Mn(2+) contacts are provided by lysine 201 and histidine 220. Residue aspartate 257 coordinates Mn(2+). Residues glutamate 285, arginine 322, and threonine 447 each contribute to the ATP site. Residue arginine 322 participates in substrate binding.

It belongs to the phosphoenolpyruvate carboxykinase (ATP) family. The cofactor is Mn(2+).

It is found in the cytoplasm. The enzyme catalyses oxaloacetate + ATP = phosphoenolpyruvate + ADP + CO2. The protein operates within carbohydrate biosynthesis; gluconeogenesis. Its function is as follows. Involved in the gluconeogenesis. Catalyzes the conversion of oxaloacetate (OAA) to phosphoenolpyruvate (PEP) through direct phosphoryl transfer between the nucleoside triphosphate and OAA. The sequence is that of Phosphoenolpyruvate carboxykinase (ATP) from Brucella suis biovar 1 (strain 1330).